Reading from the N-terminus, the 280-residue chain is uncharacterized protein (280 aa).

This sequence belongs to the metallo-dependent hydrolases superfamily.

This is an uncharacterized protein from Methanocaldococcus jannaschii (strain ATCC 43067 / DSM 2661 / JAL-1 / JCM 10045 / NBRC 100440) (Methanococcus jannaschii).